We begin with the raw amino-acid sequence, 152 residues long: Deoxyuridine 5'-triphosphate nucleotidohydrolase (152 aa).

Substrate contacts are provided by residues 72 to 74 (RSG), asparagine 85, and 89 to 91 (TVD).

It belongs to the dUTPase family. Mg(2+) is required as a cofactor.

It carries out the reaction dUTP + H2O = dUMP + diphosphate + H(+). Its pathway is pyrimidine metabolism; dUMP biosynthesis; dUMP from dCTP (dUTP route): step 2/2. Functionally, this enzyme is involved in nucleotide metabolism: it produces dUMP, the immediate precursor of thymidine nucleotides and it decreases the intracellular concentration of dUTP so that uracil cannot be incorporated into DNA. This chain is Deoxyuridine 5'-triphosphate nucleotidohydrolase, found in Nitrobacter hamburgensis (strain DSM 10229 / NCIMB 13809 / X14).